The primary structure comprises 299 residues: MWFKNLQVHRFSAPWSLSADEVEASLAKHAFFPGTSLEMQTQGWASPRDNGQLVHTVGGQMLLTLRTEKKLLPTTVVNQVTRARAAEIEEQQGYKPGRKQMKELKEQVTEELLPRAFSIRRDTRVWIDPDNGWLAIDAAATAKADEVRGMLFKALDPLPLINLHVNQSPVAAMTEWLAGDAAPGGFTVDQEIELQSGAESKATVRYVRHPLDPEDLRRHIAAGKRCTRLAMTWNDRVSFVLTDGLVVKKVAPLDVIKEQADGTAHDEDERFDADFTMMAGELSGMLGDLTEALGGERKA.

The protein belongs to the RdgC family.

The protein localises to the cytoplasm. It is found in the nucleoid. In terms of biological role, may be involved in recombination. This is Recombination-associated protein RdgC from Cupriavidus necator (strain ATCC 17699 / DSM 428 / KCTC 22496 / NCIMB 10442 / H16 / Stanier 337) (Ralstonia eutropha).